A 379-amino-acid polypeptide reads, in one-letter code: LIM/homeobox protein Lhx9 (379 aa).

2 LIM zinc-binding domains span residues 51–112 (TLCA…RFSV) and 113–175 (QRCA…LVQG). Disordered regions lie at residues 232 to 257 (ENDT…TSFK) and 310 to 379 (RQEN…TNLF). Residues 248–257 (KTKRMRTSFK) are compositionally biased toward basic residues. A DNA-binding region (homeobox) is located at residues 249–308 (TKRMRTSFKHHQLRTTKSYFAINHNPDAKDLKQLAQKTGLTKRVLQVWFQNARAKFRRNL). Residues 326-379 (APASTDSAALTPTGAASTLSDLTSPSLNVGASVTPNMDSHESGSPSQTTLTNLF) show a composition bias toward polar residues.

As to expression, isoform 1 and isoform 3 are expressed in ovary, testis, brain and heart. Isoform 4 and isoform 5 are expressed in brain.

The protein localises to the nucleus. Its function is as follows. May be involved in gonadal development. This is LIM/homeobox protein Lhx9 (lhx9) from Glandirana rugosa (Japanese wrinkled frog).